The chain runs to 230 residues: MVKLVFARHGESEWNKANLFTGWADVDLSEKGTQQAIDAGKLIKEAGIEFDQAYTSVLKRAIKTTNLALEASDQLWVPVEKSWRLNERHYGGLTGKNKAEAAEQFGDEQVHIWRRSYDVLPPNMDRDDEHSAHTDRRYASLDDSVIPDAENLKVTLERALPFWEDKIAPALKDGKNVFVGAHGNSIRALVKHIKQLSDDEIMDVEIPNFPPLVFEFDEKLNVVKEYYLGK.

Residues 8–15, 21–22, Arg60, 87–90, Lys98, 114–115, and 183–184 contribute to the substrate site; these read RHGESEWN, TG, ERHY, RR, and GN. His9 (tele-phosphohistidine intermediate) is an active-site residue. Glu87 functions as the Proton donor/acceptor in the catalytic mechanism.

This sequence belongs to the phosphoglycerate mutase family. BPG-dependent PGAM subfamily.

It catalyses the reaction (2R)-2-phosphoglycerate = (2R)-3-phosphoglycerate. Its pathway is carbohydrate degradation; glycolysis; pyruvate from D-glyceraldehyde 3-phosphate: step 3/5. Its function is as follows. Catalyzes the interconversion of 2-phosphoglycerate and 3-phosphoglycerate. The chain is 2,3-bisphosphoglycerate-dependent phosphoglycerate mutase from Streptococcus sanguinis (strain SK36).